The chain runs to 127 residues: PanD regulatory factor (127 aa).

The N-acetyltransferase domain maps to 1–127 (MKLTILRLEH…TAQHDGWEKR (127 aa)). Residues 66–68 (LRV) and 72–79 (TRRRGVGQ) each bind CoA.

Belongs to the PanZ/PanM family. In terms of assembly, interacts with PanD in the presence of CoA. Monomer.

Its function is as follows. Controls both the activation and catalytic activity of PanD in a coenzyme A (CoA)-dependent fashion. Binding of CoA or a derivative to PanM leads to interaction with PanD, which promotes the processing and activation of pro-PanD, and subsequent substrate-mediated inhibition of the active form of PanD. Lacks acetyltransferase activity. This is PanD regulatory factor from Salmonella typhimurium (strain LT2 / SGSC1412 / ATCC 700720).